The following is a 663-amino-acid chain: Syntabulin (663 aa).

Disordered regions lie at residues 1–202 (MGPL…PREK) and 216–267 (VNIH…PEQY). The segment at 2-417 (GPLRESKKEH…DTMADGLSLE (416 aa)) is sufficient for interaction with KIF5B. The residue at position 50 (Ser-50) is a Phosphoserine. The span at 57 to 73 (FNPSSSGRSARTVSSNS) shows a compositional bias: low complexity. Positions 81–97 (CPSSQSVSPVKTPSDAG) are enriched in polar residues. Ser-107 carries the post-translational modification Phosphoserine. Low complexity-rich tracts occupy residues 145–158 (EADF…GSIS), 188–198 (SSHKPGSSPSS), and 221–241 (SYAP…SDCS). Residues 271-353 (LQQKEVTVRH…MRSSLADKDK (83 aa)) adopt a coiled-coil conformation. The tract at residues 310-417 (REDWIEEECH…DTMADGLSLE (108 aa)) is sufficient for interaction with STX1A. Ser-396 and Ser-555 each carry phosphoserine. The helical transmembrane segment at 606–626 (SFLVDLLAVAAPVVPTVLWAF) threads the bilayer.

Interacts with STX1A and KIF5B. As to expression, isoform 3, isoform 4 and isoform 5 are expressed in HeLa cell line (at protein level). Isoform 3 is expressed in fetal and adult brain. Isoform 4 is expressed in numerous fetal tissues (brain, kidney, liver, lung, and thymus) and in adult brain, kidney, liver, lung, pancreas, colon, prostate, small intestine, testis and thymus. Isoform 5 is expressed in fetal brain, brain and small intestine.

Its subcellular location is the cytoplasm. It localises to the cytoskeleton. It is found in the cytoplasmic vesicle. The protein resides in the golgi apparatus membrane. Part of a kinesin motor-adapter complex that is critical for the anterograde axonal transport of active zone components and contributes to activity-dependent presynaptic assembly during neuronal development. This chain is Syntabulin (SYBU), found in Homo sapiens (Human).